We begin with the raw amino-acid sequence, 147 residues long: Large ribosomal subunit protein bL9 (147 aa).

This sequence belongs to the bacterial ribosomal protein bL9 family.

Binds to the 23S rRNA. The polypeptide is Large ribosomal subunit protein bL9 (Clostridium acetobutylicum (strain ATCC 824 / DSM 792 / JCM 1419 / IAM 19013 / LMG 5710 / NBRC 13948 / NRRL B-527 / VKM B-1787 / 2291 / W)).